Reading from the N-terminus, the 262-residue chain is Sulfite reductase, dissimilatory-type subunit beta (262 aa).

7 residues coordinate [4Fe-4S] cluster: C151, C188, C189, C193, C231, C258, and C261. A siroheme-binding site is contributed by C193.

As to quaternary structure, heterohexamer of two alpha, two beta and two gamma subunits. [4Fe-4S] cluster is required as a cofactor. Requires siroheme as cofactor.

It catalyses the reaction [DsrC protein]-trisulfide + NAD(+) + 3 H2O = [DsrC protein]-dithiol + sulfite + NADH + 3 H(+). Functionally, catalyzes the reduction of sulfite to sulfide. This is the terminal oxidation reaction in sulfate respiration, a process catalyzed by the sulfate-reducing bacteria. In Megalodesulfovibrio gigas (strain ATCC 19364 / DSM 1382 / NCIMB 9332 / VKM B-1759) (Desulfovibrio gigas), this protein is Sulfite reductase, dissimilatory-type subunit beta (dsrB).